We begin with the raw amino-acid sequence, 68 residues long: Tau-scoloptoxin(04)-Ssm1b (68 aa).

Positions 1 to 25 (MLKSFCILSVFMVLFLAKFPDLCSG) are cleaved as a signal peptide. A propeptide spanning residues 26-36 (EEISPLKIVVR) is cleaved from the precursor. Cystine bridges form between Cys45–Cys56 and Cys50–Cys63. Residues 55-67 (RCSIVDKQCIKKE) are highly charged C-terminal region, binds to TRPV1 channel.

The protein belongs to the scoloptoxin-04 family. Expressed by the venom gland.

It is found in the secreted. Extremely potent agonist and potentiator of TRPV1 (EC(50)=470-521.5 nM (mouse)). It strongly promotes the heat activation process by downshifting the activation threshold temperature. It preferably binds to the activated channel and promotes its opening. Holding the channel closed by cooling prevents binding of this toxin, leaving it ineffective. The toxin binds to the charge-rich outer pore region of the channel where it directly interacts with the pore helix and turret, two adjacent structural elements known to be critical for activation gating of TRPV1. In comparison with Sm1b, induces a TRPV1 desensitization with slower kinetics (20 seconds). In vivo, induces pain in mice after intraplantar injection. In terms of biological role, potent agonist and probable potentiator of TRPV1 (EC(50)=38.35 uM (mouse)). Also binds to the outer pore region of TRPV1. In comparison with Sm1a, induces a TRPV1 desensitization with faster kinetics (2 seconds) and leads to a more complete TRPV1 desensitization. Desensitization is achieved by reducing both the open probability and the single-channel conductance upon prolonged exposure. This is Tau-scoloptoxin(04)-Ssm1b from Scolopendra mutilans (Chinese red-headed centipede).